Consider the following 49-residue polypeptide: uncharacterized protein (49 aa).

Residues 22–42 (AIVGISIMIIIAIGIYLIIEY) traverse the membrane as a helical segment.

Its subcellular location is the membrane. This is an uncharacterized protein from Methanocaldococcus jannaschii (strain ATCC 43067 / DSM 2661 / JAL-1 / JCM 10045 / NBRC 100440) (Methanococcus jannaschii).